A 473-amino-acid chain; its full sequence is UDP-glycosyltransferase 71A27 (473 aa).

His15 acts as the Proton acceptor in catalysis. His15 contacts an anthocyanidin. Asp117 acts as the Charge relay in catalysis. 7 residues coordinate UDP-alpha-D-glucose: Ala345, Gln347, His362, Trp365, Asn366, Ser367, and Glu370. Residue Gly385 participates in an anthocyanidin binding. UDP-alpha-D-glucose contacts are provided by Glu386 and Gln387.

This sequence belongs to the UDP-glycosyltransferase family.

It catalyses the reaction (20S)-protopanaxadiol + UDP-alpha-D-glucose = (20S)-ginsenoside C-K + UDP + H(+). It participates in secondary metabolite biosynthesis; terpenoid biosynthesis. In terms of biological role, component of the triterpene saponins (e.g. PPD-type ginsenosides or panaxosides) biosynthetic pathways. Glycosyltransferase that catalyzes the biosynthesis of compound K from protopanaxadiol (PPD). In Panax ginseng (Korean ginseng), this protein is UDP-glycosyltransferase 71A27.